Consider the following 433-residue polypeptide: Ectonucleoside triphosphate diphosphohydrolase 5 (433 aa).

A signal peptide spans 1 to 24; sequence MATTWGAAFFMLVASCVCSTVFHR. Glu-172 acts as the Proton acceptor in catalysis. N-linked (GlcNAc...) asparagine glycosylation is present at Asn-232. Cystine bridges form between Cys-272-Cys-308 and Cys-368-Cys-382.

The protein belongs to the GDA1/CD39 NTPase family. In terms of assembly, monomer; active form. Homodimer; disulfide-linked. Homodimers are enzymatically inactive. The cofactor is Ca(2+). Mg(2+) serves as cofactor. Post-translationally, N-glycosylated; high-mannose type.

It localises to the endoplasmic reticulum. The protein resides in the secreted. It catalyses the reaction a ribonucleoside 5'-diphosphate + H2O = a ribonucleoside 5'-phosphate + phosphate + H(+). The enzyme catalyses GDP + H2O = GMP + phosphate + H(+). The catalysed reaction is UDP + H2O = UMP + phosphate + H(+). It carries out the reaction IDP + H2O = IMP + phosphate + H(+). It catalyses the reaction CDP + H2O = CMP + phosphate + H(+). The enzyme catalyses ADP + H2O = AMP + phosphate + H(+). It participates in protein modification; protein glycosylation. Its function is as follows. Hydrolyzes nucleoside diphosphates with a preference for GDP, IDP and UDP compared to ADP and CDP. In the lumen of the endoplasmic reticulum, hydrolyzes UDP that acts as an end-product feedback inhibitor of the UDP-Glc:glycoprotein glucosyltransferases. UMP can be transported back by an UDP-sugar antiporter to the cytosol where it is consumed to regenerate UDP-glucose. Therefore, it positively regulates protein reglucosylation by clearing UDP from the ER lumen and by promoting the regeneration of UDP-glucose. Protein reglucosylation is essential to proper glycoprotein folding and quality control in the ER. This is Ectonucleoside triphosphate diphosphohydrolase 5 (ENTPD5) from Ailuropoda melanoleuca (Giant panda).